Consider the following 301-residue polypeptide: Protein p34 (301 aa).

A run of 5 helical transmembrane segments spans residues 15-35 (YLSVTTALIILSIKLYAWVVT), 40-60 (ILAALIDSMLDITSSFINLIA), 83-103 (TIFSQSIFFFASAFFVGFSSV), 120-140 (TVMYVCIFLTIILVFYQTYVI), and 171-191 (LSDYFWFVDPLFGVVISLYIF).

Belongs to the cation diffusion facilitator (CDF) transporter (TC 2.A.4) family.

The protein resides in the cell membrane. The chain is Protein p34 (p34) from Rickettsia rickettsii (strain Sheila Smith).